Consider the following 233-residue polypeptide: MSRYLEMLSLFGVAGAHPGGLAFSKAVLQKAAPSPDQPILDAGCGTGQTAAYLGHLLYPVTVVDKDPIMLEKAKKRFANEGLAIPAYQAELEHLPFSSESFSCVLSESVLSFSRLTSSLQEISRVLKPSGMLIGIEAALKKPMPPAEKKQMMDFYGFTCLHEESEWHKLLRSYGFQKTEAMSLLPEDMEFEPTTEMDLSQTIDPIYYDTLQTHYQLMQLYSEYMGHCIFIAYK.

The protein belongs to the methyltransferase superfamily.

This is an uncharacterized protein from Bacillus subtilis (strain 168).